The primary structure comprises 374 residues: DNA-directed RNA polymerase subunit alpha (374 aa).

Residues Met-1 to Asp-270 form an alpha N-terminal domain (alpha-NTD) region. The alpha C-terminal domain (alpha-CTD) stretch occupies residues Lys-282–Glu-374.

The protein belongs to the RNA polymerase alpha chain family. In terms of assembly, homodimer. The RNAP catalytic core consists of 2 alpha, 1 beta, 1 beta' and 1 omega subunit. When a sigma factor is associated with the core the holoenzyme is formed, which can initiate transcription.

It carries out the reaction RNA(n) + a ribonucleoside 5'-triphosphate = RNA(n+1) + diphosphate. Functionally, DNA-dependent RNA polymerase catalyzes the transcription of DNA into RNA using the four ribonucleoside triphosphates as substrates. This chain is DNA-directed RNA polymerase subunit alpha, found in Ehrlichia ruminantium (strain Gardel).